A 152-amino-acid chain; its full sequence is Smith-Magenis syndrome chromosomal region candidate gene 5 protein homolog (152 aa).

Positions 41–77 (TPCAGPSSQAPPQPPQASPPAAPDHSRTPSLLASSHS) are disordered. Over residues 49–62 (QAPPQPPQASPPAA) the composition is skewed to pro residues.

In Macaca fascicularis (Crab-eating macaque), this protein is Smith-Magenis syndrome chromosomal region candidate gene 5 protein homolog (SMCR5).